An 824-amino-acid polypeptide reads, in one-letter code: Leucine--tRNA ligase (824 aa).

Positions 42 to 52 match the 'HIGH' region motif; sequence PYPSGRIHMGH. The 'KMSKS' region signature appears at 581–585; the sequence is KMSKS. An ATP-binding site is contributed by lysine 584.

The protein belongs to the class-I aminoacyl-tRNA synthetase family.

The protein resides in the cytoplasm. It carries out the reaction tRNA(Leu) + L-leucine + ATP = L-leucyl-tRNA(Leu) + AMP + diphosphate. This is Leucine--tRNA ligase from Geobacter metallireducens (strain ATCC 53774 / DSM 7210 / GS-15).